Here is a 250-residue protein sequence, read N- to C-terminus: 2,3-bisphosphoglycerate-dependent phosphoglycerate mutase (250 aa).

Substrate is bound by residues 8 to 15 (RHGESEWN), 21 to 22 (TG), arginine 60, 87 to 90 (ERHY), lysine 98, 114 to 115 (RR), and 183 to 184 (GN). Histidine 9 (tele-phosphohistidine intermediate) is an active-site residue. Glutamate 87 serves as the catalytic Proton donor/acceptor.

This sequence belongs to the phosphoglycerate mutase family. BPG-dependent PGAM subfamily.

It carries out the reaction (2R)-2-phosphoglycerate = (2R)-3-phosphoglycerate. Its pathway is carbohydrate degradation; glycolysis; pyruvate from D-glyceraldehyde 3-phosphate: step 3/5. Functionally, catalyzes the interconversion of 2-phosphoglycerate and 3-phosphoglycerate. The protein is 2,3-bisphosphoglycerate-dependent phosphoglycerate mutase of Borrelia duttonii (strain Ly).